A 639-amino-acid chain; its full sequence is Putative oxidoreductase UacF (639 aa).

5 consecutive 4Fe-4S ferredoxin-type domains span residues 3-32 (KFIA…ENWP), 47-77 (KGQA…TFQS), 78-107 (DSVQ…MVDT), 110-139 (QKCD…LMDD), and 201-235 (QQAT…YIRL). Residues C12, C15, C18, C22, C56, C59, C64, C68, C87, C90, C93, C97, C112, C115, C125, C129, C210, C213, C219, and C223 each coordinate [4Fe-4S] cluster.

Requires [4Fe-4S] cluster as cofactor.

In terms of biological role, involved in formate-dependent uric acid degradation under microaerobic and anaerobic conditions. May reduce the enzymes necessary for uric acid degradation. The sequence is that of Putative oxidoreductase UacF from Escherichia coli (strain K12).